We begin with the raw amino-acid sequence, 545 residues long: E3 ubiquitin-protein ligase ipaH9.8 (545 aa).

Residues 1-242 (MLPINNNFSL…YHGPRIYFSM (242 aa)) form an interaction with target proteins region. 8 LRR repeats span residues 57 to 77 (NSDE…NLPA), 78 to 99 (QITL…PVTL), 100 to 117 (KKLY…VLPP), 118 to 139 (ALES…PDSL), 140 to 157 (LTMN…SLPQ), 158 to 179 (ALKN…SEGN), 182 to 203 (VVRE…ILNL), and 205 to 228 (NECS…QRLT). Positions 243 to 250 (SDGQQNTL) are linker. Residues 251-545 (HRPLADAVTA…SENGSQLHHS (295 aa)) are E3 ubiquitin-protein ligase catalytic domain. The 293-residue stretch at 253–545 (PLADAVTAWF…SENGSQLHHS (293 aa)) folds into the NEL domain. C337 (glycyl thioester intermediate) is an active-site residue.

It belongs to the LRR-containing bacterial E3 ligase family. Also interacts with human and mouse U2AF1 (U2AF35). Ubiquitinated in the presence of host E1 ubiquitin-activating enzyme, E2 ubiquitin-conjugating enzyme and ubiquitin.

Its subcellular location is the secreted. It localises to the host cytoplasm. It is found in the host nucleus. The catalysed reaction is S-ubiquitinyl-[E2 ubiquitin-conjugating enzyme]-L-cysteine + [acceptor protein]-L-lysine = [E2 ubiquitin-conjugating enzyme]-L-cysteine + N(6)-ubiquitinyl-[acceptor protein]-L-lysine.. Its activity is regulated as follows. Exists in an autoinhibited state in the absence of substrate protein, due to interactions of the leucine-rich repeats with NEL domain. Is activated upon binding to a substrate protein. Functionally, effector E3 ubiquitin ligase that interferes with host's ubiquitination pathway and modulates the acute inflammatory responses, thus facilitating bacterial colonization within the host cell. Interacts with IKBKG (NEMO) and TNIP1 (ABIN-1), a ubiquitin-binding adapter protein, which results in TNIP1-dependent 'Lys-27'-linked polyubiquitination of IKBKG. Consequently, polyubiquitinated IKBKG undergoes proteasome-dependent degradation, which perturbs NF-kappa-B activation during bacterial infection. Mediates polyubiquitination of host U2AF1, leading to its proteasomal degradation. Catalyzes 'Lys-48'-linked polyubiquitination and subsequent degradation of a subset of host guanylate-binding proteins (GBP1, GBP2, GBP4 and GBP6), thereby suppressing host cell defense. In contrast, host GBP3 and GBP7 are not ubiquitinated by IpaH9.8. Uses UBE2D2 (UBCH5B) as an E2 ubiquitin-conjugating enzyme. The sequence is that of E3 ubiquitin-protein ligase ipaH9.8 (ipaH9.8) from Shigella flexneri serotype X (strain 2002017).